A 139-amino-acid polypeptide reads, in one-letter code: Peptide methionine sulfoxide reductase MsrB (139 aa).

In terms of domain architecture, MsrB spans 9–131 (TPSDNTELTE…NSASLSFIDD (123 aa)). 4 residues coordinate Zn(2+): Cys-48, Cys-51, Cys-97, and Cys-100. Residue Cys-120 is the Nucleophile of the active site.

Belongs to the MsrB Met sulfoxide reductase family. Requires Zn(2+) as cofactor.

The catalysed reaction is L-methionyl-[protein] + [thioredoxin]-disulfide + H2O = L-methionyl-(R)-S-oxide-[protein] + [thioredoxin]-dithiol. The sequence is that of Peptide methionine sulfoxide reductase MsrB from Pectobacterium carotovorum subsp. carotovorum (strain PC1).